Consider the following 299-residue polypeptide: Ribosomal protein uL3 glutamine methyltransferase (299 aa).

The protein belongs to the protein N5-glutamine methyltransferase family. PrmB subfamily.

The catalysed reaction is L-glutaminyl-[ribosomal protein uL3] + S-adenosyl-L-methionine = N(5)-methyl-L-glutaminyl-[ribosomal protein uL3] + S-adenosyl-L-homocysteine + H(+). Functionally, methylates large ribosomal subunit protein uL3 on a specific glutamine residue. The sequence is that of Ribosomal protein uL3 glutamine methyltransferase from Neisseria gonorrhoeae (strain ATCC 700825 / FA 1090).